We begin with the raw amino-acid sequence, 348 residues long: Histidinol-phosphate aminotransferase (348 aa).

At K210 the chain carries N6-(pyridoxal phosphate)lysine.

It belongs to the class-II pyridoxal-phosphate-dependent aminotransferase family. Histidinol-phosphate aminotransferase subfamily. As to quaternary structure, homodimer. Pyridoxal 5'-phosphate serves as cofactor.

The catalysed reaction is L-histidinol phosphate + 2-oxoglutarate = 3-(imidazol-4-yl)-2-oxopropyl phosphate + L-glutamate. The protein operates within amino-acid biosynthesis; L-histidine biosynthesis; L-histidine from 5-phospho-alpha-D-ribose 1-diphosphate: step 7/9. The sequence is that of Histidinol-phosphate aminotransferase from Cytophaga hutchinsonii (strain ATCC 33406 / DSM 1761 / CIP 103989 / NBRC 15051 / NCIMB 9469 / D465).